Reading from the N-terminus, the 225-residue chain is UPF0173 metal-dependent hydrolase Aflv_0488 (225 aa).

The protein belongs to the UPF0173 family.

This Anoxybacillus flavithermus (strain DSM 21510 / WK1) protein is UPF0173 metal-dependent hydrolase Aflv_0488.